A 357-amino-acid chain; its full sequence is Dihydroorotate dehydrogenase (quinone) (357 aa).

Residues 67–71 and Thr91 contribute to the FMN site; that span reads AGFDK. Lys71 serves as a coordination point for substrate. 116–120 lines the substrate pocket; sequence NRMGF. Asn153 and Asn186 together coordinate FMN. Substrate is bound at residue Asn186. The active-site Nucleophile is Ser189. Asn191 serves as a coordination point for substrate. The FMN site is built by Lys228 and Thr256. 257-258 contributes to the substrate binding site; it reads NT. FMN is bound by residues Gly282, Gly311, and 332–333; that span reads YT.

Belongs to the dihydroorotate dehydrogenase family. Type 2 subfamily. As to quaternary structure, monomer. FMN is required as a cofactor.

The protein localises to the cell membrane. The catalysed reaction is (S)-dihydroorotate + a quinone = orotate + a quinol. The protein operates within pyrimidine metabolism; UMP biosynthesis via de novo pathway; orotate from (S)-dihydroorotate (quinone route): step 1/1. Catalyzes the conversion of dihydroorotate to orotate with quinone as electron acceptor. This chain is Dihydroorotate dehydrogenase (quinone), found in Arthrobacter sp. (strain FB24).